A 265-amino-acid chain; its full sequence is Cell adhesion molecule CEACAM10 (265 aa).

The first 33 residues, 1-33, serve as a signal peptide directing secretion; the sequence is MELASAHLHKGQVPWVGLLLTASLLTYWSPATT. Ig-like V-type domains follow at residues 35 to 142 and 155 to 262; these read QVTV…HVHP and QVTV…NVHA. Residues asparagine 44, asparagine 87, and asparagine 224 are each glycosylated (N-linked (GlcNAc...) asparagine).

It belongs to the immunoglobulin superfamily. CEA family. Abundant in seminal vesicle and traces in epididymis and prostate (at protein level). Highly expressed in seminal vesicle, minor in colon and placenta and, to a lesser extent, in small intestine, caecum, stomach, salivary gland and bone marrow.

The protein resides in the secreted. The protein localises to the extracellular space. In terms of biological role, may interact with other CEACAM proteins on the sperm surface. This is Cell adhesion molecule CEACAM10 from Mus musculus (Mouse).